The following is a 400-amino-acid chain: tRNA-specific 2-thiouridylase MnmA (400 aa).

Residues 19-26 (AMSGGVDS) and L45 contribute to the ATP site. C113 serves as the catalytic Nucleophile. An intrachain disulfide couples C113 to C210. G137 is an ATP binding site. Residues 160–162 (RDQ) are interaction with tRNA. Residue C210 is the Cysteine persulfide intermediate of the active site.

The protein belongs to the MnmA/TRMU family.

Its subcellular location is the cytoplasm. It carries out the reaction S-sulfanyl-L-cysteinyl-[protein] + uridine(34) in tRNA + AH2 + ATP = 2-thiouridine(34) in tRNA + L-cysteinyl-[protein] + A + AMP + diphosphate + H(+). Functionally, catalyzes the 2-thiolation of uridine at the wobble position (U34) of tRNA, leading to the formation of s(2)U34. The sequence is that of tRNA-specific 2-thiouridylase MnmA from Rhodopseudomonas palustris (strain BisB18).